A 317-amino-acid polypeptide reads, in one-letter code: Melanocyte-stimulating hormone receptor (317 aa).

Residues 1–37 (MPMQGAQRRLLGSLNSTPTATPNLGLAANHTGAPCLE) are Extracellular-facing. Residue Asn-29 is glycosylated (N-linked (GlcNAc...) asparagine). The helical transmembrane segment at 38-63 (VSIPDGLFLSLGLVSLVENVLVVAAI) threads the bilayer. At 64-72 (AKNRNLHSP) the chain is on the cytoplasmic side. The chain crosses the membrane as a helical span at residues 73–93 (MYCFICCLALSDLLVSGSNML). Topologically, residues 94–118 (ETAVILLLEAGALATRASVVQQLQN) are extracellular. The chain crosses the membrane as a helical span at residues 119–140 (TIDVLTCSSMLCSLCFLGAIAV). Over 141 to 163 (DRYVSIFYALRYHSIVTLPRARR) the chain is Cytoplasmic. A helical transmembrane segment spans residues 164-183 (AIAAIWVASVLSSTLFIAYC). Over 184-191 (DHAAVLLC) the chain is Extracellular. The helical transmembrane segment at 192–211 (LVVFFLAMLVLMAVLYVHML) threads the bilayer. The Cytoplasmic portion of the chain corresponds to 212–240 (ARACQHAQGITRLHKRQLPAHQGFGLRGA). A helical transmembrane segment spans residues 241–266 (ATLTILLGIFFLCWGPFFLHLMLVVL). At 267 to 279 (CPQHLTCSCIFKN) the chain is on the extracellular side. A helical transmembrane segment spans residues 280–300 (FKVFLTLIICNTIIDPLIYAF). Topologically, residues 301–317 (RSQELCRTLKEVLLCSW) are cytoplasmic. Cys-315 carries S-palmitoyl cysteine lipidation.

Belongs to the G-protein coupled receptor 1 family. In terms of assembly, interacts with MGRN1, but does not undergo MGRN1-mediated ubiquitination; this interaction competes with GNAS-binding and thus inhibits agonist-induced cAMP production. Interacts with OPN3; the interaction results in a decrease in MC1R-mediated cAMP signaling and ultimately a decrease in melanin production in melanocytes.

The protein localises to the cell membrane. In terms of biological role, receptor for MSH (alpha, beta and gamma) and ACTH. The activity of this receptor is mediated by G proteins which activate adenylate cyclase. Mediates melanogenesis, the production of eumelanin (black/brown) and phaeomelanin (red/yellow), via regulation of cAMP signaling in melanocytes. The chain is Melanocyte-stimulating hormone receptor (MC1R) from Alouatta palliata (Mantled howler monkey).